The chain runs to 317 residues: Transaldolase (317 aa).

Lys-132 (schiff-base intermediate with substrate) is an active-site residue.

It belongs to the transaldolase family. Type 1 subfamily. In terms of assembly, homodimer.

It localises to the cytoplasm. The enzyme catalyses D-sedoheptulose 7-phosphate + D-glyceraldehyde 3-phosphate = D-erythrose 4-phosphate + beta-D-fructose 6-phosphate. Its pathway is carbohydrate degradation; pentose phosphate pathway; D-glyceraldehyde 3-phosphate and beta-D-fructose 6-phosphate from D-ribose 5-phosphate and D-xylulose 5-phosphate (non-oxidative stage): step 2/3. Functionally, transaldolase is important for the balance of metabolites in the pentose-phosphate pathway. The polypeptide is Transaldolase (Pseudoalteromonas atlantica (strain T6c / ATCC BAA-1087)).